A 65-amino-acid polypeptide reads, in one-letter code: Large ribosomal subunit protein bL35 (65 aa).

Belongs to the bacterial ribosomal protein bL35 family.

This chain is Large ribosomal subunit protein bL35, found in Agathobacter rectalis (strain ATCC 33656 / DSM 3377 / JCM 17463 / KCTC 5835 / VPI 0990) (Eubacterium rectale).